The primary structure comprises 513 residues: UDP-N-acetylmuramyl-tripeptide synthetase (513 aa).

S38 is a UDP-N-acetyl-alpha-D-muramoyl-L-alanyl-D-glutamate binding site. 115–121 (GTKGKTT) is a binding site for ATP. UDP-N-acetyl-alpha-D-muramoyl-L-alanyl-D-glutamate is bound by residues 161-162 (TT), S188, and R196. K230 carries the post-translational modification N6-carboxylysine.

It belongs to the MurCDEF family. MurE subfamily. Post-translationally, carboxylation is probably crucial for Mg(2+) binding and, consequently, for the gamma-phosphate positioning of ATP.

The protein localises to the cytoplasm. It participates in cell wall biogenesis; peptidoglycan biosynthesis. Catalyzes the addition of an amino acid to the nucleotide precursor UDP-N-acetylmuramoyl-L-alanyl-D-glutamate (UMAG) in the biosynthesis of bacterial cell-wall peptidoglycan. This is UDP-N-acetylmuramyl-tripeptide synthetase from Latilactobacillus sakei subsp. sakei (strain 23K) (Lactobacillus sakei subsp. sakei).